The following is a 299-amino-acid chain: GTPase Era (299 aa).

An Era-type G domain is found at 5 to 172; the sequence is RSGFISIIGR…KDLIFAKLPE (168 aa). The G1 stretch occupies residues 13–20; sequence GRPNVGKS. GTP is bound at residue 13 to 20; it reads GRPNVGKS. Positions 39–43 are G2; sequence QTTRN. Residues 60 to 63 are G3; the sequence is DTPG. Residues 60–64 and 122–125 contribute to the GTP site; these read DTPGI and NKMD. The interval 122-125 is G4; it reads NKMD. The segment at 151–153 is G5; that stretch reads VSA. One can recognise a KH type-2 domain in the interval 203–280; the sequence is TREEIPHSVA…YLELWVKVKK (78 aa).

It belongs to the TRAFAC class TrmE-Era-EngA-EngB-Septin-like GTPase superfamily. Era GTPase family. Monomer.

It is found in the cytoplasm. The protein localises to the cell membrane. An essential GTPase that binds both GDP and GTP, with rapid nucleotide exchange. Plays a role in 16S rRNA processing and 30S ribosomal subunit biogenesis and possibly also in cell cycle regulation and energy metabolism. In Heliobacterium modesticaldum (strain ATCC 51547 / Ice1), this protein is GTPase Era.